Reading from the N-terminus, the 260-residue chain is Indole-3-glycerol phosphate synthase (260 aa).

Belongs to the TrpC family.

It catalyses the reaction 1-(2-carboxyphenylamino)-1-deoxy-D-ribulose 5-phosphate + H(+) = (1S,2R)-1-C-(indol-3-yl)glycerol 3-phosphate + CO2 + H2O. It functions in the pathway amino-acid biosynthesis; L-tryptophan biosynthesis; L-tryptophan from chorismate: step 4/5. This Desulfotalea psychrophila (strain LSv54 / DSM 12343) protein is Indole-3-glycerol phosphate synthase.